Consider the following 533-residue polypeptide: MSDSTMDTQLALLVWGIAVCVTLAIVVPRWIGNNSKEPPSLGGSMLSNTYQYMTDMHGFLQRVASAQRSSKIIKFRLGPKKIYMVSGEKNIQAINRPSHSISPDVFFLEVMANVWGASKEEVGKFKQDQSGRSKNPVPGHDVKPGQPRLWHGQHRVYSEYLQRTDHANALSNKYFQLFSERLTKQPLGDWTELRLSHFFESDMAEAALVALMGPRIVELNPGFWPTMWEFARLAPRLMWGLPRWVNPKPWEIRELFHGMCRRYVDAAKREFDWNGPDVDAGWEPHYGSRMARELISWAEKNLSPETTAGMVATFIFGTNANSVPMSTWAMMELIADPELYHAVREECLAASTLDPATGERVFDTQKLLSMPLLQSVYIETLRLHVSINVTREVTQPISLDGHVLTPGSLIQAPSQIGQYSEVWGCDGHPASQFWAGRHLKHDSGRPEFTMAGRTASFFPFGGGPSICPGRVFAKQEILMTVAALVTRFEIELIEWTHPDGSKSDRPAQNDQSYIGAVGIPPDRDMKVRWKRLW.

A helical transmembrane segment spans residues 8-28 (TQLALLVWGIAVCVTLAIVVP). Asn33 carries an N-linked (GlcNAc...) asparagine glycan. The segment at 123–148 (GKFKQDQSGRSKNPVPGHDVKPGQPR) is disordered. Asn388 is a glycosylation site (N-linked (GlcNAc...) asparagine). Cys467 lines the heme pocket.

It belongs to the cytochrome P450 family. The cofactor is heme.

It localises to the membrane. It participates in secondary metabolite biosynthesis. In terms of biological role, cytochrome P450 monooxygenase; part of the gene cluster that mediates the biosynthesis of calbistrin A and related compounds. Calbistrin A is a secondary metabolite with an interesting structure that was recently found to have bioactivity against leukemia cells. It consists of two polyketides linked by an ester bond: a bicyclic decalin containing polyketide and a linear 12 carbon dioic acid structure. The polyketide synthase calA is probably responsible for forming the decalin moiety. Because calA lacks a designated enoylreductase (ER) domain, the required activity is provided by the trans-enoyl reductase calK. Following release from the PKS, calF then probably catalyzes the oxidation and the subsequent Diels Alder cycloisomerization that lead to the formation of the decalin moiety. The decalin polyketide backbone includes two C-methyl groups, at C7 and C11 in backbone, of which the C7 position is probably methylated by the methyltransferase domain of calA. A candidate for adding the methyl group at C11, if not done by CalA, is the cluster methyltransferase calH. Several additional tailoring enzymes within the cluster could be involved in the modification of the decalin polyketide product. Those include the 3 cytochrome P450 monooxygenases CalE, CalG and CalL, of which one might be responsible for the introduction of the extra hydroxyl group attached to the backbone of the decalin moiety, at position C9 in the backbone, that allows for attachment of the linear moiety. One tailoring enzyme activity that is expected to be involved in biosynthesis of calbistrin is an acyltransferase for connecting the two polyketide synthase products, and which could be performed by the cluster acyltransferase calJ. The enzyme responsible for the biosynthesis of the linear moiety, probably a second PKS, has not been identified yet. The polypeptide is Cytochrome P450 monooxygenase calL (Penicillium decumbens).